Here is a 154-residue protein sequence, read N- to C-terminus: MSQAGQSSRTITLEEALEQLSLLESQLNQLQATIREIEVRIAQLTAVEDALASLAEGAEDALIPLDGRGTVLVPASIKKLERILVHAGLNVFVEVDREKALEYLRDEKAALSKLLDAYSREYARLAQYYSALRSAIESALQAAPPQAKSQQSQQ.

Belongs to the prefoldin alpha subunit family. As to quaternary structure, heterohexamer of two alpha and four beta subunits.

The protein localises to the cytoplasm. In terms of biological role, molecular chaperone capable of stabilizing a range of proteins. Seems to fulfill an ATP-independent, HSP70-like function in archaeal de novo protein folding. In Hyperthermus butylicus (strain DSM 5456 / JCM 9403 / PLM1-5), this protein is Prefoldin subunit alpha.